The following is a 394-amino-acid chain: Acetate kinase (394 aa).

A Mg(2+)-binding site is contributed by Asn-7. Lys-14 provides a ligand contact to ATP. Residue Arg-88 participates in substrate binding. The active-site Proton donor/acceptor is Asp-145. ATP contacts are provided by residues 205-209, 279-281, and 327-331; these read HLGNG, DFR, and GIGEN. Glu-379 provides a ligand contact to Mg(2+).

It belongs to the acetokinase family. In terms of assembly, homodimer. The cofactor is Mg(2+). Mn(2+) is required as a cofactor.

The protein resides in the cytoplasm. It catalyses the reaction acetate + ATP = acetyl phosphate + ADP. The protein operates within metabolic intermediate biosynthesis; acetyl-CoA biosynthesis; acetyl-CoA from acetate: step 1/2. In terms of biological role, catalyzes the formation of acetyl phosphate from acetate and ATP. Can also catalyze the reverse reaction. This Campylobacter lari (strain RM2100 / D67 / ATCC BAA-1060) protein is Acetate kinase.